The following is a 202-amino-acid chain: Glycerol-3-phosphate acyltransferase (202 aa).

4 consecutive transmembrane segments (helical) span residues 2-22 (ANLL…AVVV), 85-105 (LAMV…HRFA), 119-139 (AINP…AFFF), and 158-178 (VLME…ILLI).

The protein belongs to the PlsY family. In terms of assembly, probably interacts with PlsX.

It localises to the cell inner membrane. It carries out the reaction an acyl phosphate + sn-glycerol 3-phosphate = a 1-acyl-sn-glycero-3-phosphate + phosphate. Its pathway is lipid metabolism; phospholipid metabolism. In terms of biological role, catalyzes the transfer of an acyl group from acyl-phosphate (acyl-PO(4)) to glycerol-3-phosphate (G3P) to form lysophosphatidic acid (LPA). This enzyme utilizes acyl-phosphate as fatty acyl donor, but not acyl-CoA or acyl-ACP. The protein is Glycerol-3-phosphate acyltransferase of Cupriavidus pinatubonensis (strain JMP 134 / LMG 1197) (Cupriavidus necator (strain JMP 134)).